Consider the following 346-residue polypeptide: Probable RNA methyltransferase PA14_40730 (346 aa).

The Proton acceptor role is filled by glutamate 91. A Radical SAM core domain is found at 94 to 320 (LLPRGGLCVS…TKVRNSAGQD (227 aa)). A disulfide bridge links cysteine 101 with cysteine 325. [4Fe-4S] cluster contacts are provided by cysteine 108, cysteine 112, and cysteine 115. S-adenosyl-L-methionine is bound by residues 153-154 (GE), serine 183, 206-208 (SLH), and asparagine 282. The S-methylcysteine intermediate role is filled by cysteine 325.

Belongs to the radical SAM superfamily. RlmN family. [4Fe-4S] cluster is required as a cofactor.

Its subcellular location is the cytoplasm. The protein is Probable RNA methyltransferase PA14_40730 of Pseudomonas aeruginosa (strain UCBPP-PA14).